A 110-amino-acid polypeptide reads, in one-letter code: Ig lambda-1 chain V region S178 (110 aa).

Positions glutamine 1–leucine 106 constitute an Ig-like domain.

This chain is Ig lambda-1 chain V region S178, found in Mus musculus (Mouse).